Consider the following 117-residue polypeptide: Holo-[acyl-carrier-protein] synthase (117 aa).

Mg(2+) is bound by residues Asp6 and Glu55.

The protein belongs to the P-Pant transferase superfamily. AcpS family. Requires Mg(2+) as cofactor.

It is found in the cytoplasm. The enzyme catalyses apo-[ACP] + CoA = holo-[ACP] + adenosine 3',5'-bisphosphate + H(+). In terms of biological role, transfers the 4'-phosphopantetheine moiety from coenzyme A to a Ser of acyl-carrier-protein. This Chlorobaculum tepidum (strain ATCC 49652 / DSM 12025 / NBRC 103806 / TLS) (Chlorobium tepidum) protein is Holo-[acyl-carrier-protein] synthase.